Here is a 395-residue protein sequence, read N- to C-terminus: MRNKGDFLFTSESVSEGHPDKVADRISDTVLDAYLAADGESRVACETLVTTNRVVLAGEVRGPSSVTPEALIEGARAAIRDIGYDQAGFSWKNAQIESYLHAQSADIAVGVDSAGEKDEGAGDQGIMFGFATRETETLMPAPLFYAHGILHRIRDLRKAGDARVAMLQPDAKSQVTLRYVDGRPVGATSVVISTQHDEGASQAAIREALRDVVQDVLPEGWMCPEDEFYANPTGVFVIGGPDGDCGLTGRKIIVDTYGGAAPHGGGAFSGKDPTKVDRSAAYACRYLAKNVVAAGLADRCTLQISYAIGVSHPLSVYVDLDGTGKDVDEAKLGSVLREVMNLTPRGIRQHLRLNRPIYTETSAYGHFGRTPDEARDNFTWEKTDLVDALRGAFNR.

His-18 provides a ligand contact to ATP. Residue Asp-20 participates in Mg(2+) binding. Glu-46 is a K(+) binding site. L-methionine contacts are provided by Glu-59 and Gln-103. The interval 103–113 is flexible loop; the sequence is QSADIAVGVDS. ATP is bound by residues 170 to 172, Asp-244, 250 to 251, Ala-267, and Lys-271; these read DAK and RK. Asp-244 is a binding site for L-methionine. L-methionine is bound at residue Lys-275.

This sequence belongs to the AdoMet synthase family. As to quaternary structure, homotetramer; dimer of dimers. It depends on Mg(2+) as a cofactor. K(+) is required as a cofactor.

It is found in the cytoplasm. It catalyses the reaction L-methionine + ATP + H2O = S-adenosyl-L-methionine + phosphate + diphosphate. The protein operates within amino-acid biosynthesis; S-adenosyl-L-methionine biosynthesis; S-adenosyl-L-methionine from L-methionine: step 1/1. Its function is as follows. Catalyzes the formation of S-adenosylmethionine (AdoMet) from methionine and ATP. The overall synthetic reaction is composed of two sequential steps, AdoMet formation and the subsequent tripolyphosphate hydrolysis which occurs prior to release of AdoMet from the enzyme. This is S-adenosylmethionine synthase from Gluconacetobacter diazotrophicus (strain ATCC 49037 / DSM 5601 / CCUG 37298 / CIP 103539 / LMG 7603 / PAl5).